Consider the following 146-residue polypeptide: Ribosome maturation factor RimP (146 aa).

It belongs to the RimP family.

It localises to the cytoplasm. Its function is as follows. Required for maturation of 30S ribosomal subunits. This chain is Ribosome maturation factor RimP, found in Helicobacter pylori (strain Shi470).